The following is a 224-amino-acid chain: Putative adhesin RF_1314 (224 aa).

A signal peptide spans 1 to 22 (MKKLLLIAATSATILSSSISFA).

This is Putative adhesin RF_1314 from Rickettsia felis (strain ATCC VR-1525 / URRWXCal2) (Rickettsia azadi).